The sequence spans 705 residues: MVCHRYLLGLGASTLCLRRLAQYPSTEYHGIASRHRSPGYYAYILGNFNISNEEQLFSSVHSLANNDSDVLPVEDNGTTNLTGTGEATSETGKEEEVVNEPYNGNRMRNFCIIAHVDHGKSTLADRFLELTKAVEPHEIQGQYLDNMELERERGITIKLQSALIKYTYPKDGQVYSLNLIDTPGHIDFNHEARRSIAACEGAILVVDGTKGIQAQTVTTSMIAIEAGLKLIPVVNKIDVPFCDYESTVADLTSLFDFSEDEILMASAKEGFGINEILDAVVERIPPPKINLDRPFRALVFDSQYDPHRGVVSYVRVSDGIIKKLDDVVFLGHNLESRITAVGVMMPELRERDVLRSGEVGWLCSNTKDPSKVAVGDTVALKSAVKDNNVEPLVAFAPAKPSVFAGLYPCDGSDYMRLSVALEKLKLNDHSIVFEPSESSIAGHGFKCGFNGLLHLDVTVQRLQREFDVGVIVTSPSVPYKCILKNGKEITVSDAAHWPEEGMVKVSMEPWTNVTVRIPGDCHKKVSNLLTQMRGEFQKKSEFAGGKSLVLEYKVPMIEIISTFFDNLKSMTNGFGSFDYEGTEYREIDLCKLRVLINGEEAGGLSMLVARDNAYKSGRLLVETLREVIPPKQFKINLQAAIGKRVIAALSIPALRKNVTERCSGGDPSRKRKLLENQAKGKKYMAEIGNVSIPFDAYKAVHKALR.

Residues 1–20 (MVCHRYLLGLGASTLCLRRL) constitute a mitochondrion transit peptide. The segment at 72–92 (PVEDNGTTNLTGTGEATSETG) is disordered. The segment covering 76–90 (NGTTNLTGTGEATSE) has biased composition (polar residues). Residues 105–288 (NRMRNFCIIA…AVVERIPPPK (184 aa)) form the tr-type G domain. GTP is bound by residues 114–121 (AHVDHGKS), 181–185 (DTPGH), and 235–238 (NKID).

The protein belongs to the TRAFAC class translation factor GTPase superfamily. Classic translation factor GTPase family. LepA subfamily.

Its subcellular location is the mitochondrion inner membrane. It catalyses the reaction GTP + H2O = GDP + phosphate + H(+). In terms of biological role, promotes mitochondrial protein synthesis. May act as a fidelity factor of the translation reaction, by catalyzing a one-codon backward translocation of tRNAs on improperly translocated ribosomes. Binds to mitochondrial ribosomes in a GTP-dependent manner. The protein is Translation factor GUF1 homolog, mitochondrial of Babesia bovis.